The following is a 168-amino-acid chain: Protein archease (168 aa).

An N-acetylalanine modification is found at A2. The Ca(2+) site is built by D39, D167, and I168.

Belongs to the archease family. Component of the tRNA-splicing ligase complex.

In terms of biological role, component of the tRNA-splicing ligase complex required to facilitate the enzymatic turnover of catalytic subunit RTCB. Together with DDX1, acts by facilitating the guanylylation of RTCB, a key intermediate step in tRNA ligation. The polypeptide is Protein archease (Zbtb8os) (Mus musculus (Mouse)).